Consider the following 502-residue polypeptide: Glycerol kinase (502 aa).

Residue threonine 14 participates in ADP binding. ATP is bound by residues threonine 14, threonine 15, and serine 16. Residue threonine 14 participates in sn-glycerol 3-phosphate binding. Arginine 18 contributes to the ADP binding site. Residues arginine 84, glutamate 85, tyrosine 136, and aspartate 246 each coordinate sn-glycerol 3-phosphate. Glycerol-binding residues include arginine 84, glutamate 85, tyrosine 136, aspartate 246, and glutamine 247. 2 residues coordinate ADP: threonine 268 and glycine 311. Residues threonine 268, glycine 311, glutamine 315, and glycine 412 each contribute to the ATP site. The ADP site is built by glycine 412 and asparagine 416.

This sequence belongs to the FGGY kinase family.

It carries out the reaction glycerol + ATP = sn-glycerol 3-phosphate + ADP + H(+). Its pathway is polyol metabolism; glycerol degradation via glycerol kinase pathway; sn-glycerol 3-phosphate from glycerol: step 1/1. With respect to regulation, inhibited by fructose 1,6-bisphosphate (FBP). Key enzyme in the regulation of glycerol uptake and metabolism. Catalyzes the phosphorylation of glycerol to yield sn-glycerol 3-phosphate. This chain is Glycerol kinase, found in Pasteurella multocida (strain Pm70).